We begin with the raw amino-acid sequence, 116 residues long: Ribosome-binding factor A (116 aa).

Belongs to the RbfA family. Monomer. Binds 30S ribosomal subunits, but not 50S ribosomal subunits or 70S ribosomes.

It localises to the cytoplasm. Functionally, one of several proteins that assist in the late maturation steps of the functional core of the 30S ribosomal subunit. Associates with free 30S ribosomal subunits (but not with 30S subunits that are part of 70S ribosomes or polysomes). Required for efficient processing of 16S rRNA. May interact with the 5'-terminal helix region of 16S rRNA. This chain is Ribosome-binding factor A, found in Streptococcus pneumoniae serotype 4 (strain ATCC BAA-334 / TIGR4).